Consider the following 524-residue polypeptide: Leucine-rich repeat-containing protein 1 (524 aa).

LRR repeat units follow at residues 11 to 34 (NRHVEAIDKRHCSLVYVPEEIYRY), 35 to 58 (ARSLEELLLDANQLRELPEQFFQL), 60 to 81 (KLRKLGLSDNEIQRLPPEIANF), 83 to 105 (QLVELDVSRNDIPEIPESIAFCK), 107 to 126 (LQVADFSGNPLTRLPESFPE), 127 to 149 (LQNLTCLSVNDISLQSLPENIGN), 150 to 172 (LYNLASLELRENLLTYLPDSLTQ), 173 to 196 (LRRLEELDLGNNEIYNLPESIGAL), 198 to 218 (HLKDLWLDGNQLSELPQEIGN), 219 to 242 (LKNLLCLDVSENRLERLPEEISGL), 244 to 264 (SLTYLVISQNLLETIPEGIGK), 265 to 288 (LKKLSILKLDQNRLTQLPEAIGDC), 290 to 310 (NLTELVLTENRLLTLPKSIGK), 311 to 334 (LKKLSNLNADRNKLVSLPKEIGGC), 336 to 356 (SLTMFCIRDNRLTRLPAEVSQ), 357 to 380 (AVELHVLDVAGNRLHHLPLSLTTL), and 382 to 405 (LKALWLSDNQSQPLLTFQTDIDRA). Residues 456 to 512 (SAIRFLEDEKDEDENETRTLQRRATPHPGELKNMKKTVENLRNDMNAAKGLDSNKNE) adopt a coiled-coil conformation. Residues 464–485 (EKDEDENETRTLQRRATPHPGE) are disordered. Thr480 bears the Phosphothreonine mark.

In terms of assembly, interacts with DLG1. May form a complex with DLG1 and ERBIN, where interaction between LRRC1 and ERBIN is indirect.

It localises to the cytoplasm. The protein resides in the membrane. This is Leucine-rich repeat-containing protein 1 (Lrrc1) from Mus musculus (Mouse).